Here is a 391-residue protein sequence, read N- to C-terminus: Multidrug resistance protein MdtL (391 aa).

A run of 12 helical transmembrane segments spans residues 4–24, 42–62, 69–89, 93–113, 131–151, 158–178, 203–222, 245–265, 269–289, 293–313, 331–351, and 356–376; these read FLIC…MYLV, IAFS…GKVA, PVAI…SLAE, LFLA…VVAF, LLNG…HLIM, SLFW…LFIL, FFLS…LTFV, ALTA…LGIF, TLMI…AVSP, VSLF…GVAM, LGIA…VVGI, and MLIG…MFVA.

This sequence belongs to the major facilitator superfamily. DHA1 family. MdtL (TC 2.A.1.2.22) subfamily.

It localises to the cell inner membrane. Confers resistance to chloramphenicol. This is Multidrug resistance protein MdtL from Escherichia coli O17:K52:H18 (strain UMN026 / ExPEC).